Reading from the N-terminus, the 231-residue chain is Phosphoribosylformylglycinamidine synthase subunit PurQ (231 aa).

In terms of domain architecture, Glutamine amidotransferase type-1 spans 7–231 (GVVVFPGSNC…RLFASLFRQL (225 aa)). Cys-89 serves as the catalytic Nucleophile. Catalysis depends on residues His-206 and Glu-208.

Part of the FGAM synthase complex composed of 1 PurL, 1 PurQ and 2 PurS subunits.

The protein resides in the cytoplasm. The enzyme catalyses N(2)-formyl-N(1)-(5-phospho-beta-D-ribosyl)glycinamide + L-glutamine + ATP + H2O = 2-formamido-N(1)-(5-O-phospho-beta-D-ribosyl)acetamidine + L-glutamate + ADP + phosphate + H(+). It catalyses the reaction L-glutamine + H2O = L-glutamate + NH4(+). The protein operates within purine metabolism; IMP biosynthesis via de novo pathway; 5-amino-1-(5-phospho-D-ribosyl)imidazole from N(2)-formyl-N(1)-(5-phospho-D-ribosyl)glycinamide: step 1/2. Its function is as follows. Part of the phosphoribosylformylglycinamidine synthase complex involved in the purines biosynthetic pathway. Catalyzes the ATP-dependent conversion of formylglycinamide ribonucleotide (FGAR) and glutamine to yield formylglycinamidine ribonucleotide (FGAM) and glutamate. The FGAM synthase complex is composed of three subunits. PurQ produces an ammonia molecule by converting glutamine to glutamate. PurL transfers the ammonia molecule to FGAR to form FGAM in an ATP-dependent manner. PurS interacts with PurQ and PurL and is thought to assist in the transfer of the ammonia molecule from PurQ to PurL. This chain is Phosphoribosylformylglycinamidine synthase subunit PurQ, found in Chlorobium luteolum (strain DSM 273 / BCRC 81028 / 2530) (Pelodictyon luteolum).